We begin with the raw amino-acid sequence, 147 residues long: Sentan (147 aa).

Residues 1–36 are disordered; the sequence is MGGCMHSTWDHALHSRGEPRPSEAPASISAPSKMPK. The span at 8–21 shows a compositional bias: basic and acidic residues; that stretch reads TWDHALHSRGEPRP. Low complexity predominate over residues 23-32; sequence EAPASISAPS.

It belongs to the S-100 family. As to expression, expressed exclusively in ciliated epithelial cells. Detected in ciliated epithelium of trachea and oviduct (at protein level).

Its subcellular location is the cell projection. It is found in the cilium. Its function is as follows. May be a component of the linker structure that bridges the ciliary membrane and peripheral singlet microtubules. The polypeptide is Sentan (Sntn) (Mus musculus (Mouse)).